The chain runs to 277 residues: Formamidopyrimidine-DNA glycosylase (277 aa).

Proline 2 (schiff-base intermediate with DNA) is an active-site residue. Glutamate 3 functions as the Proton donor in the catalytic mechanism. Lysine 59 functions as the Proton donor; for beta-elimination activity in the catalytic mechanism. DNA-binding residues include histidine 96, arginine 115, and arginine 158. An FPG-type zinc finger spans residues 243 to 277; that stretch reads WVYGRGGNPCRRCGGEILREKRAGRSTHFCPRCQK. The Proton donor; for delta-elimination activity role is filled by arginine 267.

This sequence belongs to the FPG family. In terms of assembly, monomer. Zn(2+) is required as a cofactor.

It catalyses the reaction Hydrolysis of DNA containing ring-opened 7-methylguanine residues, releasing 2,6-diamino-4-hydroxy-5-(N-methyl)formamidopyrimidine.. It carries out the reaction 2'-deoxyribonucleotide-(2'-deoxyribose 5'-phosphate)-2'-deoxyribonucleotide-DNA = a 3'-end 2'-deoxyribonucleotide-(2,3-dehydro-2,3-deoxyribose 5'-phosphate)-DNA + a 5'-end 5'-phospho-2'-deoxyribonucleoside-DNA + H(+). In terms of biological role, involved in base excision repair of DNA damaged by oxidation or by mutagenic agents. Acts as a DNA glycosylase that recognizes and removes damaged bases. Has a preference for oxidized purines, such as 7,8-dihydro-8-oxoguanine (8-oxoG). Has AP (apurinic/apyrimidinic) lyase activity and introduces nicks in the DNA strand. Cleaves the DNA backbone by beta-delta elimination to generate a single-strand break at the site of the removed base with both 3'- and 5'-phosphates. The chain is Formamidopyrimidine-DNA glycosylase from Heliobacterium modesticaldum (strain ATCC 51547 / Ice1).